A 565-amino-acid chain; its full sequence is uncharacterized protein (565 aa).

The first 19 residues, 1 to 19, serve as a signal peptide directing secretion; that stretch reads MRWLATFVALLIAISSVSA. Residues 494–504 are compositionally biased toward polar residues; the sequence is TGAENVTNNSV. Positions 494–525 are disordered; that stretch reads TGAENVTNNSVTATTPPAKASQQTPAPATPPV. Low complexity predominate over residues 505–519; the sequence is TATTPPAKASQQTPA.

This is an uncharacterized protein from Archaeoglobus fulgidus (strain ATCC 49558 / DSM 4304 / JCM 9628 / NBRC 100126 / VC-16).